We begin with the raw amino-acid sequence, 68 residues long: Metallothionein-3 (68 aa).

Residue M1 is modified to N-acetylmethionine. Residues 1-30 (MDPETCPCPSGGSCTCADSCKCEGCKCTSC) form a beta region. A divalent metal cation-binding residues include C6, C8, C14, C16, C20, C22, C25, C27, and C30. Residues 31-68 (KKSCCSCCPAECEKCAKDCVCKGGEGAEAEAEKCSCCE) are alpha. S33 is subject to Phosphoserine. A divalent metal cation-binding residues include C34, C35, C37, C38, C42, C45, C49, C51, C64, C66, and C67.

The protein belongs to the metallothionein superfamily. Type 1 family.

Its function is as follows. Binds heavy metals. Contains five zinc and one copper atoms per polypeptide chain and only a negligible amount of cadmium. This Macaca fascicularis (Crab-eating macaque) protein is Metallothionein-3 (MT3).